The chain runs to 190 residues: MRGLRPALSTFLFLLLITGGVYPLLTTALGQWWFPWQANGSLIREGDTVRGSALIGQNFTGNGYFHGRPSATAEMPYNPQASGGSNLAVSNPELDKQIAARVAALRAANPDASTSVPVELVTASASGLDNNITPQAAAWQIPRVAKARNLSVEQLTQLIAKYSQQPLVKYIGQPVVNIVELNLALDKLDE.

The helical transmembrane segment at 10–30 threads the bilayer; the sequence is TFLFLLLITGGVYPLLTTALG.

Belongs to the KdpC family. As to quaternary structure, the system is composed of three essential subunits: KdpA, KdpB and KdpC.

Its subcellular location is the cell inner membrane. Part of the high-affinity ATP-driven potassium transport (or Kdp) system, which catalyzes the hydrolysis of ATP coupled with the electrogenic transport of potassium into the cytoplasm. This subunit acts as a catalytic chaperone that increases the ATP-binding affinity of the ATP-hydrolyzing subunit KdpB by the formation of a transient KdpB/KdpC/ATP ternary complex. This chain is Potassium-transporting ATPase KdpC subunit, found in Escherichia fergusonii (strain ATCC 35469 / DSM 13698 / CCUG 18766 / IAM 14443 / JCM 21226 / LMG 7866 / NBRC 102419 / NCTC 12128 / CDC 0568-73).